The following is a 336-amino-acid chain: DNA-directed RNA polymerase subunit alpha (336 aa).

Residues 1 to 238 form an alpha N-terminal domain (alpha-NTD) region; sequence MNDLDLNLVP…NLFLPFLQAE (238 aa). Positions 267–336 are alpha C-terminal domain (alpha-CTD); sequence AKKVTFQHIF…LQKRFGMRLQ (70 aa).

Belongs to the RNA polymerase alpha chain family. In plastids the minimal PEP RNA polymerase catalytic core is composed of four subunits: alpha, beta, beta', and beta''. When a (nuclear-encoded) sigma factor is associated with the core the holoenzyme is formed, which can initiate transcription.

The protein resides in the plastid. It localises to the chloroplast. It catalyses the reaction RNA(n) + a ribonucleoside 5'-triphosphate = RNA(n+1) + diphosphate. In terms of biological role, DNA-dependent RNA polymerase catalyzes the transcription of DNA into RNA using the four ribonucleoside triphosphates as substrates. The protein is DNA-directed RNA polymerase subunit alpha of Huperzia lucidula (Shining clubmoss).